A 328-amino-acid chain; its full sequence is UDP-N-acetylglucosamine transporter YEA4 (328 aa).

The next 10 membrane-spanning stretches (helical) occupy residues 1–21, 30–50, 66–86, 98–118, 122–142, 166–186, 198–218, 241–261, 274–294, and 298–318; these read MSFVLILSLVFGGCCSNVISF, INLGNIVTFTQFVSVTLIQLP, HIPLKIHMLAVFLFFTSSVAN, IHIIIRCSGTTLTMIIGWAVC, YSKLQVQSAIIMTLGAIVASL, SMFGIFVVLVATALMSLLSLL, WKETLFYSHFLALPLFMLGYT, LPIATKLFMLIANNVTQFICI, LTLSVVLLVRKFVSLLLSVYI, and VLSVTAYLGTITVFLGAGLYS.

This sequence belongs to the nucleotide-sugar transporter family. SLC35A subfamily.

Its subcellular location is the golgi apparatus membrane. Functionally, sugar transporter that specifically mediates the transport of UDP-N-acetylglucosamine (UDP-GlcNAc) from the cytosol into Golgi vesicles where glycosyltransferases function. This chain is UDP-N-acetylglucosamine transporter YEA4 (YEA4), found in Kluyveromyces lactis (strain ATCC 8585 / CBS 2359 / DSM 70799 / NBRC 1267 / NRRL Y-1140 / WM37) (Yeast).